The sequence spans 129 residues: Large-conductance mechanosensitive channel (129 aa).

Helical transmembrane passes span 10–30 (FAVKGNVVDMAVGVIIGGAFG) and 76–96 (GAFIQNVFDFLIIAIAVFGMV).

This sequence belongs to the MscL family. Homopentamer.

The protein resides in the cell inner membrane. Its function is as follows. Channel that opens in response to stretch forces in the membrane lipid bilayer. May participate in the regulation of osmotic pressure changes within the cell. The chain is Large-conductance mechanosensitive channel from Actinobacillus pleuropneumoniae serotype 5b (strain L20).